A 477-amino-acid polypeptide reads, in one-letter code: Ketoisovalerate oxidoreductase subunit VorA (477 aa).

In terms of assembly, heterotrimer of the VorA, VorB and VorC subunits.

The enzyme catalyses 3-methyl-2-oxobutanoate + 2 oxidized [2Fe-2S]-[ferredoxin] + CoA = 2-methylpropanoyl-CoA + 2 reduced [2Fe-2S]-[ferredoxin] + CO2 + H(+). In Methanothermobacter thermautotrophicus (strain ATCC 29096 / DSM 1053 / JCM 10044 / NBRC 100330 / Delta H) (Methanobacterium thermoautotrophicum), this protein is Ketoisovalerate oxidoreductase subunit VorA (vorA).